The sequence spans 694 residues: Elongation factor G (694 aa).

Residues 6-288 enclose the tr-type G domain; it reads KLYRNIGIAA…GVIEYLPSPT (283 aa). GTP-binding positions include 15–22, 86–90, and 140–143; these read AHVDAGKT, DTPGH, and NKMD.

This sequence belongs to the TRAFAC class translation factor GTPase superfamily. Classic translation factor GTPase family. EF-G/EF-2 subfamily.

It is found in the cytoplasm. Catalyzes the GTP-dependent ribosomal translocation step during translation elongation. During this step, the ribosome changes from the pre-translocational (PRE) to the post-translocational (POST) state as the newly formed A-site-bound peptidyl-tRNA and P-site-bound deacylated tRNA move to the P and E sites, respectively. Catalyzes the coordinated movement of the two tRNA molecules, the mRNA and conformational changes in the ribosome. This chain is Elongation factor G, found in Legionella pneumophila (strain Paris).